The following is a 492-amino-acid chain: MANYFNTLNLRNQLAQLGKCRFMAREEFADEASYLKGKKVVIVGCGAQGLNQGLNMRDSGLDIAYALRAEAIAEKRASWRKATENGFKVGTYEELIPQADLVVNLTPDKQHTSVVQAVQPLMKDGAALGYSHGFNIVEVGEQVRKDVTVVMVAPKCPGTEVREEYKRGFGVPTLIAVHPENDPKGEGMAIAKAWAAATGGHRAGVLESSFVAEVKSDLMGEQTILCGMLQAGSLLCFDKLVAEGTDAAYAEKLIQFGWETITEALKQGGITLMMDRLSNPAKVRAYALSEQLKTIMAPLFQKHMDDIISGEFSSGMMADWANDDKKLLGWREETGKTAFETAAQFEGKIGEQDYFDQGVVMIAMVKAGVELAFETMVAAGIVEESAYYESLHELPLIANTIARKRLYEMNVVISDTAEYGNYLFSYAAVPLLQEFMTTLQAGDLGKQAQTSTSVDNAQLRDVNEAIRHHDIETVGRKLRGYMTDMKRIAVAG.

In terms of domain architecture, KARI N-terminal Rossmann spans 15 to 208 (AQLGKCRFMA…GGHRAGVLES (194 aa)). NADP(+) contacts are provided by residues 45 to 48 (CGAQ), arginine 68, arginine 76, serine 78, and 108 to 110 (DKQ). The active site involves histidine 132. Residue glycine 158 coordinates NADP(+). KARI C-terminal knotted domains lie at 209–344 (SFVA…TAAQ) and 345–485 (FEGK…MTDM). Aspartate 217, glutamate 221, glutamate 389, and glutamate 393 together coordinate Mg(2+). Serine 414 provides a ligand contact to substrate.

The protein belongs to the ketol-acid reductoisomerase family. The cofactor is Mg(2+).

The enzyme catalyses (2R)-2,3-dihydroxy-3-methylbutanoate + NADP(+) = (2S)-2-acetolactate + NADPH + H(+). It carries out the reaction (2R,3R)-2,3-dihydroxy-3-methylpentanoate + NADP(+) = (S)-2-ethyl-2-hydroxy-3-oxobutanoate + NADPH + H(+). It functions in the pathway amino-acid biosynthesis; L-isoleucine biosynthesis; L-isoleucine from 2-oxobutanoate: step 2/4. Its pathway is amino-acid biosynthesis; L-valine biosynthesis; L-valine from pyruvate: step 2/4. Its function is as follows. Involved in the biosynthesis of branched-chain amino acids (BCAA). Catalyzes an alkyl-migration followed by a ketol-acid reduction of (S)-2-acetolactate (S2AL) to yield (R)-2,3-dihydroxy-isovalerate. In the isomerase reaction, S2AL is rearranged via a Mg-dependent methyl migration to produce 3-hydroxy-3-methyl-2-ketobutyrate (HMKB). In the reductase reaction, this 2-ketoacid undergoes a metal-dependent reduction by NADPH to yield (R)-2,3-dihydroxy-isovalerate. This is Ketol-acid reductoisomerase (NADP(+)) from Erwinia tasmaniensis (strain DSM 17950 / CFBP 7177 / CIP 109463 / NCPPB 4357 / Et1/99).